The chain runs to 126 residues: uncharacterized protein (126 aa).

The helical transmembrane segment at 55–77 (MLLINSNLVLSGLLLFIDVYRAA) threads the bilayer.

The protein resides in the membrane. This is an uncharacterized protein from Dictyostelium discoideum (Social amoeba).